The sequence spans 314 residues: Homoserine O-acetyltransferase (314 aa).

Cysteine 142 acts as the Acyl-thioester intermediate in catalysis. Substrate is bound by residues lysine 163 and serine 192. Histidine 235 acts as the Proton acceptor in catalysis. Glutamate 237 is a catalytic residue. Arginine 249 contacts substrate.

Belongs to the MetA family.

The protein resides in the cytoplasm. It catalyses the reaction L-homoserine + acetyl-CoA = O-acetyl-L-homoserine + CoA. It participates in amino-acid biosynthesis; L-methionine biosynthesis via de novo pathway; O-acetyl-L-homoserine from L-homoserine: step 1/1. Its function is as follows. Transfers an acetyl group from acetyl-CoA to L-homoserine, forming acetyl-L-homoserine. This is Homoserine O-acetyltransferase from Streptococcus pneumoniae (strain JJA).